The sequence spans 802 residues: Acetyl-CoA decarbonylase/synthase complex subunit alpha (802 aa).

Residues cysteine 69, cysteine 72, cysteine 73, cysteine 75, cysteine 80, and cysteine 90 each coordinate [4Fe-4S] cluster. Position 113 (histidine 113) interacts with CO. Residues histidine 246, cysteine 274, and cysteine 319 each contribute to the [Ni-4Fe-4S] cluster site. 2 consecutive 4Fe-4S ferredoxin-type domains span residues 404 to 432 (EELKELADSCVHCLKCEVACPNSLPISEA) and 442 to 473 (SKFELLHDKCIACGRCEYACPKDIDIVNVIEK). Residues cysteine 413, cysteine 416, cysteine 419, cysteine 423, cysteine 451, cysteine 454, cysteine 457, and cysteine 461 each contribute to the [4Fe-4S] cluster site. Residues cysteine 519, cysteine 548, and cysteine 583 each coordinate [Ni-4Fe-4S] cluster.

The protein belongs to the Ni-containing carbon monoxide dehydrogenase family. Heterotetramer of two alpha and two epsilon subunits. The ACDS complex is made up of alpha, epsilon, beta, gamma and delta subunits with a probable stoichiometry of (alpha(2)epsilon(2))(4)-beta(8)-(gamma(1)delta(1))(8). The cofactor is [4Fe-4S] cluster. [Ni-4Fe-4S] cluster serves as cofactor.

The catalysed reaction is CO + 2 oxidized [2Fe-2S]-[ferredoxin] + H2O = 2 reduced [2Fe-2S]-[ferredoxin] + CO2 + 2 H(+). The protein operates within one-carbon metabolism; methanogenesis from acetate. Functionally, part of the ACDS complex that catalyzes the reversible cleavage of acetyl-CoA, allowing growth on acetate as sole source of carbon and energy. The alpha-epsilon subcomponent functions as a carbon monoxide dehydrogenase. The chain is Acetyl-CoA decarbonylase/synthase complex subunit alpha from Methanococcoides burtonii (strain DSM 6242 / NBRC 107633 / OCM 468 / ACE-M).